Consider the following 104-residue polypeptide: Complex III assembly factor LYRM7 (104 aa).

S60 carries the phosphoserine modification.

The protein belongs to the complex I LYR family. In terms of assembly, interacts with UQCRFS1.

It localises to the mitochondrion matrix. Assembly factor required for Rieske Fe-S protein UQCRFS1 incorporation into the cytochrome b-c1 (CIII) complex. Functions as a chaperone, binding to this subunit within the mitochondrial matrix and stabilizing it prior to its translocation and insertion into the late CIII dimeric intermediate within the mitochondrial inner membrane. This chain is Complex III assembly factor LYRM7 (LYRM7), found in Bos taurus (Bovine).